The chain runs to 81 residues: Photosystem I iron-sulfur center (81 aa).

4Fe-4S ferredoxin-type domains are found at residues 2 to 31 and 39 to 68; these read SHSV…MIPW and IASA…VRVY. [4Fe-4S] cluster is bound by residues Cys-11, Cys-14, Cys-17, Cys-21, Cys-48, Cys-51, Cys-54, and Cys-58.

The eukaryotic PSI reaction center is composed of at least 11 subunits. The cofactor is [4Fe-4S] cluster.

The protein resides in the plastid thylakoid membrane. It catalyses the reaction reduced [plastocyanin] + hnu + oxidized [2Fe-2S]-[ferredoxin] = oxidized [plastocyanin] + reduced [2Fe-2S]-[ferredoxin]. Apoprotein for the two 4Fe-4S centers FA and FB of photosystem I (PSI); essential for photochemical activity. FB is the terminal electron acceptor of PSI, donating electrons to ferredoxin. The C-terminus interacts with PsaA/B/D and helps assemble the protein into the PSI complex. Required for binding of PsaD and PsaE to PSI. PSI is a plastocyanin-ferredoxin oxidoreductase, converting photonic excitation into a charge separation, which transfers an electron from the donor P700 chlorophyll pair to the spectroscopically characterized acceptors A0, A1, FX, FA and FB in turn. The polypeptide is Photosystem I iron-sulfur center (Cuscuta reflexa (Southern Asian dodder)).